A 119-amino-acid chain; its full sequence is Protein TusC (119 aa).

This sequence belongs to the DsrF/TusC family. In terms of assembly, heterohexamer, formed by a dimer of trimers. The hexameric TusBCD complex contains 2 copies each of TusB, TusC and TusD. The TusBCD complex interacts with TusE.

The protein localises to the cytoplasm. In terms of biological role, part of a sulfur-relay system required for 2-thiolation of 5-methylaminomethyl-2-thiouridine (mnm(5)s(2)U) at tRNA wobble positions. The chain is Protein TusC from Pectobacterium carotovorum subsp. carotovorum (strain PC1).